The sequence spans 547 residues: Chaperonin GroEL (547 aa).

ATP contacts are provided by residues 30–33 (TLGP), Lys-51, 87–91 (DGTTT), Gly-415, and Asp-496. Residues 528 to 547 (KEGAAPAGGMPDMGGMGGMM) form a disordered region. The span at 538-547 (PDMGGMGGMM) shows a compositional bias: gly residues.

This sequence belongs to the chaperonin (HSP60) family. In terms of assembly, forms a cylinder of 14 subunits composed of two heptameric rings stacked back-to-back. Interacts with the co-chaperonin GroES.

The protein localises to the cytoplasm. The catalysed reaction is ATP + H2O + a folded polypeptide = ADP + phosphate + an unfolded polypeptide.. Functionally, together with its co-chaperonin GroES, plays an essential role in assisting protein folding. The GroEL-GroES system forms a nano-cage that allows encapsulation of the non-native substrate proteins and provides a physical environment optimized to promote and accelerate protein folding. The protein is Chaperonin GroEL of Ruegeria sp. (strain TM1040) (Silicibacter sp.).